A 289-amino-acid polypeptide reads, in one-letter code: Serine/threonine-protein phosphatase Pgam5, mitochondrial (289 aa).

A helical transmembrane segment spans residues 7-23 (FVCGTGAGLAVYYLQRL).

Belongs to the phosphoglycerate mutase family. BPG-dependent PGAM subfamily. In terms of assembly, interacts with Pk92B/ASK1.

The protein resides in the mitochondrion outer membrane. The enzyme catalyses O-phospho-L-seryl-[protein] + H2O = L-seryl-[protein] + phosphate. It carries out the reaction O-phospho-L-threonyl-[protein] + H2O = L-threonyl-[protein] + phosphate. Its function is as follows. Displays phosphatase activity for serine/threonine residues, and dephosphorylates and activates Pk92B kinase. Has apparently no phosphoglycerate mutase activity. This is Serine/threonine-protein phosphatase Pgam5, mitochondrial from Drosophila erecta (Fruit fly).